We begin with the raw amino-acid sequence, 445 residues long: Xylose isomerase (445 aa).

Active-site residues include His-109 and Asp-112. Residues Glu-240, Glu-276, His-279, Asp-304, Asp-315, Asp-317, and Asp-347 each coordinate Mg(2+).

The protein belongs to the xylose isomerase family. As to quaternary structure, homotetramer. The cofactor is Mg(2+).

It is found in the cytoplasm. The catalysed reaction is alpha-D-xylose = alpha-D-xylulofuranose. The protein is Xylose isomerase of Xanthomonas oryzae pv. oryzae (strain MAFF 311018).